The primary structure comprises 313 residues: Protein-methionine-sulfoxide reductase catalytic subunit MsrP (313 aa).

Residues 1-44 (MARWRPDMAEREATPEALYLRRREFLALGAAGAVGLLVARGARA) constitute a signal peptide (tat-type signal). Residues N76, 79–80 (YE), C134, T169, N217, R222, and 233–235 (GAK) contribute to the Mo-molybdopterin site.

It belongs to the MsrP family. Heterodimer of a catalytic subunit (MsrP) and a heme-binding subunit (MsrQ). Mo-molybdopterin serves as cofactor. Predicted to be exported by the Tat system. The position of the signal peptide cleavage has not been experimentally proven.

The protein localises to the periplasm. It catalyses the reaction L-methionyl-[protein] + a quinone + H2O = L-methionyl-(S)-S-oxide-[protein] + a quinol. The catalysed reaction is L-methionyl-[protein] + a quinone + H2O = L-methionyl-(R)-S-oxide-[protein] + a quinol. Its function is as follows. Part of the MsrPQ system that repairs oxidized periplasmic proteins containing methionine sulfoxide residues (Met-O), using respiratory chain electrons. Thus protects these proteins from oxidative-stress damage caused by reactive species of oxygen and chlorine generated by the host defense mechanisms. MsrPQ is essential for the maintenance of envelope integrity under bleach stress, rescuing a wide series of structurally unrelated periplasmic proteins from methionine oxidation. The catalytic subunit MsrP is non-stereospecific, being able to reduce both (R-) and (S-) diastereoisomers of methionine sulfoxide. This is Protein-methionine-sulfoxide reductase catalytic subunit MsrP from Anaeromyxobacter sp. (strain K).